A 327-amino-acid polypeptide reads, in one-letter code: Methionyl-tRNA formyltransferase (327 aa).

118-121 serves as a coordination point for (6S)-5,6,7,8-tetrahydrofolate; it reads SLLP.

It belongs to the Fmt family.

The enzyme catalyses L-methionyl-tRNA(fMet) + (6R)-10-formyltetrahydrofolate = N-formyl-L-methionyl-tRNA(fMet) + (6S)-5,6,7,8-tetrahydrofolate + H(+). Its function is as follows. Attaches a formyl group to the free amino group of methionyl-tRNA(fMet). The formyl group appears to play a dual role in the initiator identity of N-formylmethionyl-tRNA by promoting its recognition by IF2 and preventing the misappropriation of this tRNA by the elongation apparatus. In Corynebacterium jeikeium (strain K411), this protein is Methionyl-tRNA formyltransferase.